A 1164-amino-acid polypeptide reads, in one-letter code: FH1/FH2 domain-containing protein 1 (1164 aa).

The region spanning 53-458 (AQIPAVHRLL…AAETEKQVAL (406 aa)) is the GBD/FH3 domain. Disordered stretches follow at residues 340–411 (DIEE…VGPP) and 470–500 (MPNE…QSPA). Residues 355–368 (KPSSEEGKRSRRSL) are compositionally biased toward basic and acidic residues. S367 is modified (phosphoserine). A compositionally biased stretch (low complexity) spans 402–411 (GPASSPVGPP). S486 is subject to Phosphoserine. The region spanning 487-615 (PETAPAARTP…LAAPLPHSVP (129 aa)) is the FH1 domain. T495 is subject to Phosphothreonine. 3 positions are modified to phosphoserine: S498, S523, and S573. The segment at 566 to 619 (GKDIPAPSPPLPLLSGVPPPPPLPPPPPIKGPFPPPPPLPLAAPLPHSVPDSSA) is disordered. The span at 571–608 (APSPPLPLLSGVPPPPPLPPPPPIKGPFPPPPPLPLAA) shows a compositional bias: pro residues. An interaction with ROCK1 region spans residues 612–807 (HSVPDSSALP…AEPLFDLKVG (196 aa)). An FH2 domain is found at 616–1013 (DSSALPTKRK…YRERNKTRGR (398 aa)). The residue at position 690 (T690) is a Phosphothreonine. Residues 884-921 (LTRCAKVDFEQLTENLGQLERRSRAAEESLRSLAKHEL) are a coiled coil. A disordered region spans residues 1020–1143 (KFSGVAGEAP…NRKSLRRTLK (124 aa)). Positions 1028–1041 (APSNPSVPVAVSSG) are enriched in low complexity. Positions 1053–1133 (MKSLLTSRPE…AARERKRSRG (81 aa)) constitute a DAD domain. Polar residues predominate over residues 1073–1089 (MVQSSSPIMPTVGPSTA). Residues 1127 to 1142 (ERKRSRGNRKSLRRTL) are compositionally biased toward basic residues.

The protein belongs to the formin homology family. As to quaternary structure, self-associates via the FH2 domain. Binds to F-actin via its N-terminus. Binds to the cytoplasmic domain of CD21 via its C-terminus. Interacts with ROCK1 in a Src-dependent manner. Post-translationally, phosphorylated by ROCK1. As to expression, ubiquitous. Highly expressed in spleen.

The protein localises to the cytoplasm. It is found in the cytoskeleton. It localises to the cell projection. The protein resides in the bleb. Its function is as follows. Required for the assembly of F-actin structures, such as stress fibers. Depends on the Rho-ROCK cascade for its activity. Contributes to the coordination of microtubules with actin fibers and plays a role in cell elongation. Acts synergistically with ROCK1 to promote SRC-dependent non-apoptotic plasma membrane blebbing. The polypeptide is FH1/FH2 domain-containing protein 1 (FHOD1) (Homo sapiens (Human)).